A 643-amino-acid polypeptide reads, in one-letter code: Transmembrane protein 62 (643 aa).

The chain crosses the membrane as a helical span at residues 9–29 (VVAGLAAAAVAALLLEHYGLA). The N-linked (GlcNAc...) asparagine glycan is linked to asparagine 180. 4 helical membrane-spanning segments follow: residues 431-451 (IVAR…LITF), 484-504 (YSVL…GEII), 532-552 (GIIQ…WSLL), and 572-592 (IIPV…SCYF).

It localises to the membrane. This is Transmembrane protein 62 (Tmem62) from Mus musculus (Mouse).